The chain runs to 123 residues: Small ribosomal subunit protein uS12 (123 aa).

Position 89 is a 3-methylthioaspartic acid (aspartate 89).

It belongs to the universal ribosomal protein uS12 family. As to quaternary structure, part of the 30S ribosomal subunit. Contacts proteins S8 and S17. May interact with IF1 in the 30S initiation complex.

Its function is as follows. With S4 and S5 plays an important role in translational accuracy. In terms of biological role, interacts with and stabilizes bases of the 16S rRNA that are involved in tRNA selection in the A site and with the mRNA backbone. Located at the interface of the 30S and 50S subunits, it traverses the body of the 30S subunit contacting proteins on the other side and probably holding the rRNA structure together. The combined cluster of proteins S8, S12 and S17 appears to hold together the shoulder and platform of the 30S subunit. This Mesorhizobium japonicum (strain LMG 29417 / CECT 9101 / MAFF 303099) (Mesorhizobium loti (strain MAFF 303099)) protein is Small ribosomal subunit protein uS12.